The primary structure comprises 171 residues: NADH-quinone oxidoreductase subunit I 2 (171 aa).

4Fe-4S ferredoxin-type domains lie at 39-71 (IVLT…LSKA) and 81-110 (EHFR…LTPD). Positions 51, 54, 57, 61, 90, 93, 96, and 100 each coordinate [4Fe-4S] cluster.

Belongs to the complex I 23 kDa subunit family. NDH-1 is composed of 14 different subunits. Subunits NuoA, H, J, K, L, M, N constitute the membrane sector of the complex. It depends on [4Fe-4S] cluster as a cofactor.

It is found in the cell inner membrane. The catalysed reaction is a quinone + NADH + 5 H(+)(in) = a quinol + NAD(+) + 4 H(+)(out). Functionally, NDH-1 shuttles electrons from NADH, via FMN and iron-sulfur (Fe-S) centers, to quinones in the respiratory chain. The immediate electron acceptor for the enzyme in this species is believed to be ubiquinone. Couples the redox reaction to proton translocation (for every two electrons transferred, four hydrogen ions are translocated across the cytoplasmic membrane), and thus conserves the redox energy in a proton gradient. This Rhodopseudomonas palustris (strain BisB18) protein is NADH-quinone oxidoreductase subunit I 2.